The sequence spans 297 residues: Light-independent protochlorophyllide reductase iron-sulfur ATP-binding protein (297 aa).

Residues 41 to 46 (GIGKST) and lysine 70 each bind ATP. Serine 45 lines the Mg(2+) pocket. [4Fe-4S] cluster-binding residues include cysteine 126 and cysteine 160. ATP-binding positions include 211–212 (NR) and 235–237 (PDL).

The protein belongs to the NifH/BchL/ChlL family. Homodimer. Protochlorophyllide reductase is composed of three subunits; BchL, BchN and BchB. The cofactor is [4Fe-4S] cluster.

It carries out the reaction chlorophyllide a + oxidized 2[4Fe-4S]-[ferredoxin] + 2 ADP + 2 phosphate = protochlorophyllide a + reduced 2[4Fe-4S]-[ferredoxin] + 2 ATP + 2 H2O. Its pathway is porphyrin-containing compound metabolism; bacteriochlorophyll biosynthesis (light-independent). Component of the dark-operative protochlorophyllide reductase (DPOR) that uses Mg-ATP and reduced ferredoxin to reduce ring D of protochlorophyllide (Pchlide) to form chlorophyllide a (Chlide). This reaction is light-independent. The L component serves as a unique electron donor to the NB-component of the complex, and binds Mg-ATP. This chain is Light-independent protochlorophyllide reductase iron-sulfur ATP-binding protein, found in Methylorubrum extorquens (strain PA1) (Methylobacterium extorquens).